We begin with the raw amino-acid sequence, 345 residues long: Protein D345L (345 aa).

Belongs to the asfivirus D345L family. Interacts with IKKA/CHUK and IKBKB.

The protein localises to the host cytoplasm. In terms of biological role, plays a role in the negative regulation of host NF-kappa-B signaling pathway. Mechanistically, recruits host IKKA/CHUK and IKBKB to suppress their kinase activity towards NFKBIA. The chain is Protein D345L from African swine fever virus (strain Badajoz 1971 Vero-adapted) (Ba71V).